The primary structure comprises 509 residues: Solute carrier family 2, facilitated glucose transporter member 4 (509 aa).

At 1-23 the chain is on the cytoplasmic side; it reads MPSGFQQIGSDDGEPPRQRVTGT. Positions 7–13 are interaction with SRFBP1; it reads QIGSDDG. Phosphoserine is present on serine 10. A helical transmembrane segment spans residues 24–44; the sequence is LVLAVFSAVLGSLQFGYNIGV. Over 45 to 80 the chain is Extracellular; that stretch reads INAPQKVIEQSYNATWLGRQGPGGPDSIPQGTLTTL. Asparagine 57 carries N-linked (GlcNAc...) asparagine glycosylation. Residues 81–101 form a helical membrane-spanning segment; sequence WALSVAIFSVGGMISSFLIGI. At 102–110 the chain is on the cytoplasmic side; it reads ISQWLGRKR. The helical transmembrane segment at 111–131 threads the bilayer; the sequence is AMLANNVLAVLGGALMGLANA. Over 132–141 the chain is Extracellular; it reads AASYEILILG. Residues 142–162 traverse the membrane as a helical segment; sequence RFLIGAYSGLTSGLVPMYVGE. Topologically, residues 163 to 170 are cytoplasmic; that stretch reads IAPTHLRG. Residues 171-191 traverse the membrane as a helical segment; sequence ALGTLNQLAIVIGILVAQVLG. A D-glucose-binding site is contributed by glutamine 177. At 192–200 the chain is on the extracellular side; the sequence is LESMLGTAT. Residues 201–221 traverse the membrane as a helical segment; it reads LWPLLLALTVLPALLQLILLP. Residues 222 to 286 lie on the Cytoplasmic side of the membrane; it reads FCPESPRYLY…QLLGSRTHRQ (65 aa). Cysteine 223 carries S-palmitoyl cysteine lipidation. Position 274 is a phosphoserine; by SGK1 (serine 274). A helical transmembrane segment spans residues 287-307; the sequence is PLIIAVVLQLSQQLSGINAVF. D-glucose is bound by residues 298–299 and asparagine 304; that span reads QQ. Residues 308 to 322 lie on the Extracellular side of the membrane; it reads YYSTSIFESAGVGQP. A helical membrane pass occupies residues 323 to 343; the sequence is AYATIGAGVVNTVFTLVSVLL. Asparagine 333 is a binding site for D-glucose. The Cytoplasmic segment spans residues 344–352; the sequence is VERAGRRTL. Residues 353–373 form a helical membrane-spanning segment; it reads HLLGLAGMCGCAILMTVALLL. Residues 374 to 384 lie on the Extracellular side of the membrane; it reads LERVPAMSYVS. A helical membrane pass occupies residues 385–405; the sequence is IVAIFGFVAFFEIGPGPIPWF. Glutamate 396 and tryptophan 404 together coordinate D-glucose. Over 406–416 the chain is Cytoplasmic; that stretch reads IVAELFSQGPR. A helical transmembrane segment spans residues 417 to 437; sequence PAAMAVAGFSNWTCNFIVGMG. Over 438–444 the chain is Extracellular; it reads FQYVADA. Residues 445–465 form a helical membrane-spanning segment; the sequence is MGPYVFLLFAVLLLGFFIFTF. Topologically, residues 466 to 508 are cytoplasmic; the sequence is LKVPETRGRTFDQISAAFRRTPSLLEQEVKPSTELEYLGPDEN. Residue threonine 486 is modified to Phosphothreonine. Position 488 is a phosphoserine (serine 488). The Dileucine internalization motif motif lies at 489–490; sequence LL.

The protein belongs to the major facilitator superfamily. Sugar transporter (TC 2.A.1.1) family. Glucose transporter subfamily. As to quaternary structure, binds to DAXX. Interacts via its N-terminus with SRFBP1. Interacts with NDUFA9. Interacts with TRARG1; the interaction is required for proper SLC2A4 recycling after insulin stimulation. Sumoylated. In terms of processing, palmitoylated. Palmitoylation by ZDHHC7 controls the insulin-dependent translocation of GLUT4 to the plasma membrane. Expressed in skeletal and cardiac muscles. Expressed in brown and white adipose tissues.

It is found in the cell membrane. The protein localises to the endomembrane system. It localises to the cytoplasm. Its subcellular location is the perinuclear region. The enzyme catalyses D-glucose(out) = D-glucose(in). In terms of biological role, insulin-regulated facilitative glucose transporter, which plays a key role in removal of glucose from circulation. Response to insulin is regulated by its intracellular localization: in the absence of insulin, it is efficiently retained intracellularly within storage compartments in muscle and fat cells. Upon insulin stimulation, translocates from these compartments to the cell surface where it transports glucose from the extracellular milieu into the cell. The polypeptide is Solute carrier family 2, facilitated glucose transporter member 4 (Mus musculus (Mouse)).